Here is a 447-residue protein sequence, read N- to C-terminus: GTPase Der (447 aa).

2 consecutive EngA-type G domains span residues 3–167 and 180–353; these read PVIA…ALPE and IRLA…KSAN. GTP is bound by residues 9–16, 56–60, 119–122, 186–193, 233–237, and 298–301; these read GRPNVGKS, DTGGF, NKAE, DTAGL, and NKWD. The KH-like domain occupies 354 to 438; that stretch reads RKMPTPVLTR…PLRIEMKTSS (85 aa).

It belongs to the TRAFAC class TrmE-Era-EngA-EngB-Septin-like GTPase superfamily. EngA (Der) GTPase family. Associates with the 50S ribosomal subunit.

Its function is as follows. GTPase that plays an essential role in the late steps of ribosome biogenesis. The sequence is that of GTPase Der from Acidovorax sp. (strain JS42).